The chain runs to 528 residues: Biotin carboxylase 1, chloroplastic (528 aa).

The transit peptide at 1-51 (MEATLPVCKSVTSTPGLFMGKTSGIRSSQCSFMMGNKVNFPRQRAQTAHVH) directs the protein to the chloroplast. Residues Lys-179, Lys-221, 227 to 228 (GG), 263 to 266 (EKYV), and His-271 contribute to the ATP site. The 198-residue stretch at 183 to 380 (RETMKKAGVP…LIEEQIRVAM (198 aa)) folds into the ATP-grasp domain. Lys-300 lines the hydrogencarbonate pocket. Residues Glu-338 and Glu-351 each contribute to the ATP site. Mg(2+) is bound by residues Glu-338, Glu-351, and Asn-353. Residues Glu-338, Glu-351, and Asn-353 each contribute to the Mn(2+) site. Arg-355, Val-358, and Arg-401 together coordinate hydrogencarbonate. Arg-355 is a catalytic residue. Biotin is bound at residue Arg-401.

As to quaternary structure, acetyl-CoA carboxylase is a heterohexamer composed of biotin carboxyl carrier protein, biotin carboxylase and two subunits each of ACCase subunit alpha and ACCase plastid-coded subunit beta (accD). It depends on Mg(2+) as a cofactor. The cofactor is Mn(2+).

It localises to the plastid. It is found in the chloroplast. The catalysed reaction is N(6)-biotinyl-L-lysyl-[protein] + hydrogencarbonate + ATP = N(6)-carboxybiotinyl-L-lysyl-[protein] + ADP + phosphate + H(+). It participates in lipid metabolism; malonyl-CoA biosynthesis; malonyl-CoA from acetyl-CoA: step 1/1. Functionally, this protein is a component of the acetyl coenzyme A carboxylase complex; first, biotin carboxylase catalyzes the carboxylation of the carrier protein and then the transcarboxylase transfers the carboxyl group to form malonyl-CoA. This chain is Biotin carboxylase 1, chloroplastic, found in Populus trichocarpa (Western balsam poplar).